Consider the following 595-residue polypeptide: Solute carrier family 13 member 1 (595 aa).

5 consecutive transmembrane segments (helical) span residues 13-33, 41-61, 77-97, 108-128, and 131-151; these read FLFV…LHTK, LFVV…TALL, VASA…CLAT, IALK…LGFM, and TAFL…MPIA. Asparagine 174 and asparagine 207 each carry an N-linked (GlcNAc...) asparagine glycan. Helical transmembrane passes span 239–259, 290–310, 348–368, 381–401, 464–484, 491–511, 512–532, and 554–574; these read LTCL…ITGT, PAAL…FLGF, IVTL…DPGF, GFAT…LIPA, PLGS…VTSL, PATI…IHVN, PLYI…LPVA, and GLGV…TWIV. A glycan (N-linked (GlcNAc...) asparagine) is linked at asparagine 591.

This sequence belongs to the SLC13A/DASS transporter (TC 2.A.47) family. NADC subfamily. Highly expressed in kidney; not detectable in the other tissues tested.

The protein localises to the apical cell membrane. The enzyme catalyses sulfate(out) + 3 Na(+)(out) = sulfate(in) + 3 Na(+)(in). It carries out the reaction selenate(out) + 3 Na(+)(out) = selenate(in) + 3 Na(+)(in). The catalysed reaction is thiosulfate(out) + 3 Na(+)(out) = thiosulfate(in) + 3 Na(+)(in). With respect to regulation, inhibited by thiosulfate, selenate, molybdate, tungstate, citrate and succinate. Its function is as follows. Sodium:sulfate symporter that mediates sulfate reabsorption in the kidney and small intestine. Can also mediate the transport of selenate and thiosulfate. This Homo sapiens (Human) protein is Solute carrier family 13 member 1 (SLC13A1).